The primary structure comprises 582 residues: Phosphoribosylaminoimidazole carboxylase (582 aa).

The 192-residue stretch at 114-305 folds into the ATP-grasp domain; sequence KKYLAERGVA…QFENHLRAIL (192 aa). Residue 143–200 coordinates ATP; that stretch reads AGRLGLPLMLKAKTLAYDGRGNSPLKSASSGDIQASLKFLGDRPLYAEGWAPFVKEVA.

The protein in the C-terminal section; belongs to the AIR carboxylase family. Class I subfamily.

The enzyme catalyses 5-amino-1-(5-phospho-D-ribosyl)imidazole-4-carboxylate + H(+) = 5-amino-1-(5-phospho-beta-D-ribosyl)imidazole + CO2. The protein operates within purine metabolism; IMP biosynthesis via de novo pathway; 5-amino-1-(5-phospho-D-ribosyl)imidazole-4-carboxylate from 5-amino-1-(5-phospho-D-ribosyl)imidazole (carboxylase route): step 1/1. The chain is Phosphoribosylaminoimidazole carboxylase (ADE2) from Cryptococcus neoformans var. neoformans serotype D (strain JEC21 / ATCC MYA-565) (Filobasidiella neoformans).